The primary structure comprises 341 residues: HTH-type transcriptional repressor PurR (341 aa).

Residues A2–V56 form the HTH lacI-type domain. A DNA-binding region (H-T-H motif) is located at residues I4 to N23. Residues S48–V56 mediate DNA binding. Hypoxanthine-binding residues include Y73, R190, T192, F221, and D275.

Homodimer.

Its pathway is purine metabolism; purine nucleotide biosynthesis [regulation]. Is the main repressor of the genes involved in the de novo synthesis of purine nucleotides, regulating purB, purC, purEK, purF, purHD, purL, purMN and guaBA expression. PurR is allosterically activated to bind its cognate DNA by binding the purine corepressors, hypoxanthine or guanine, thereby effecting transcription repression. The chain is HTH-type transcriptional repressor PurR from Escherichia coli (strain UTI89 / UPEC).